The sequence spans 99 residues: Large ribosomal subunit protein uL23 (99 aa).

The protein belongs to the universal ribosomal protein uL23 family. As to quaternary structure, part of the 50S ribosomal subunit. Contacts protein L29, and trigger factor when it is bound to the ribosome.

Its function is as follows. One of the early assembly proteins it binds 23S rRNA. One of the proteins that surrounds the polypeptide exit tunnel on the outside of the ribosome. Forms the main docking site for trigger factor binding to the ribosome. This Saccharopolyspora erythraea (strain ATCC 11635 / DSM 40517 / JCM 4748 / NBRC 13426 / NCIMB 8594 / NRRL 2338) protein is Large ribosomal subunit protein uL23.